The primary structure comprises 158 residues: Ribonuclease H (158 aa).

An RNase H type-1 domain is found at 5–146 (MRKQIEIFTD…CDQLAKQGAE (142 aa)). Mg(2+) is bound by residues D14, E52, D74, and D138.

Belongs to the RNase H family. As to quaternary structure, monomer. The cofactor is Mg(2+).

It is found in the cytoplasm. It carries out the reaction Endonucleolytic cleavage to 5'-phosphomonoester.. Its function is as follows. Endonuclease that specifically degrades the RNA of RNA-DNA hybrids. In Mannheimia succiniciproducens (strain KCTC 0769BP / MBEL55E), this protein is Ribonuclease H.